The chain runs to 206 residues: RNA pyrophosphohydrolase (206 aa).

One can recognise a Nudix hydrolase domain in the interval 6–150; sequence GYRPNVGIVI…KRDVYRKVMK (145 aa). Residues 38 to 59 carry the Nudix box motif; it reads GGINEGENIETAMYRELYEEVG. Positions 162–191 are enriched in basic and acidic residues; that stretch reads KPETVEKPRVERTEKRDFQKRDNQKREFRK. A disordered region spans residues 162 to 206; that stretch reads KPETVEKPRVERTEKRDFQKRDNQKREFRKSARMWNNSHQKGKAQ.

This sequence belongs to the Nudix hydrolase family. RppH subfamily. A divalent metal cation is required as a cofactor.

Accelerates the degradation of transcripts by removing pyrophosphate from the 5'-end of triphosphorylated RNA, leading to a more labile monophosphorylated state that can stimulate subsequent ribonuclease cleavage. This Actinobacillus pleuropneumoniae serotype 5b (strain L20) protein is RNA pyrophosphohydrolase.